The following is a 287-amino-acid chain: ATP synthase gamma chain (287 aa).

It belongs to the ATPase gamma chain family. As to quaternary structure, F-type ATPases have 2 components, CF(1) - the catalytic core - and CF(0) - the membrane proton channel. CF(1) has five subunits: alpha(3), beta(3), gamma(1), delta(1), epsilon(1). CF(0) has three main subunits: a, b and c.

The protein localises to the cell inner membrane. In terms of biological role, produces ATP from ADP in the presence of a proton gradient across the membrane. The gamma chain is believed to be important in regulating ATPase activity and the flow of protons through the CF(0) complex. In Yersinia pestis, this protein is ATP synthase gamma chain.